Reading from the N-terminus, the 122-residue chain is MASVYENSYMIVLIFLLLGILLPVVALTLGRMLRPNKPSAAKATTYESGIEPFHDANIRFHARYYIFALLFVIFDVETLFLYPWAVAYDNLGLFALIEMLIFVVMLLVGLAYAWKKKVLQWL.

A run of 3 helical transmembrane segments spans residues 10–30 (MIVL…LTLG), 66–86 (IFAL…PWAV), and 91–111 (LGLF…VGLA).

The protein belongs to the complex I subunit 3 family. NDH-1 is composed of 14 different subunits. Subunits NuoA, H, J, K, L, M, N constitute the membrane sector of the complex.

It localises to the cell membrane. It carries out the reaction a quinone + NADH + 5 H(+)(in) = a quinol + NAD(+) + 4 H(+)(out). In terms of biological role, NDH-1 shuttles electrons from NADH, via FMN and iron-sulfur (Fe-S) centers, to quinones in the respiratory chain. The immediate electron acceptor for the enzyme in this species is believed to be a menaquinone. Couples the redox reaction to proton translocation (for every two electrons transferred, four hydrogen ions are translocated across the cytoplasmic membrane), and thus conserves the redox energy in a proton gradient. This chain is NADH-quinone oxidoreductase subunit A, found in Bacillus anthracis.